The following is a 347-amino-acid chain: S-adenosylmethionine:tRNA ribosyltransferase-isomerase (347 aa).

This sequence belongs to the QueA family. Monomer.

The protein resides in the cytoplasm. The enzyme catalyses 7-aminomethyl-7-carbaguanosine(34) in tRNA + S-adenosyl-L-methionine = epoxyqueuosine(34) in tRNA + adenine + L-methionine + 2 H(+). It participates in tRNA modification; tRNA-queuosine biosynthesis. Functionally, transfers and isomerizes the ribose moiety from AdoMet to the 7-aminomethyl group of 7-deazaguanine (preQ1-tRNA) to give epoxyqueuosine (oQ-tRNA). In Pseudomonas aeruginosa (strain ATCC 15692 / DSM 22644 / CIP 104116 / JCM 14847 / LMG 12228 / 1C / PRS 101 / PAO1), this protein is S-adenosylmethionine:tRNA ribosyltransferase-isomerase.